A 334-amino-acid chain; its full sequence is GTP 3',8-cyclase (334 aa).

Positions K13 to A239 constitute a Radical SAM core domain. R22 contributes to the GTP binding site. 2 residues coordinate [4Fe-4S] cluster: C29 and C33. Y35 provides a ligand contact to S-adenosyl-L-methionine. C36 contacts [4Fe-4S] cluster. R73 is a GTP binding site. Position 77 (G77) interacts with S-adenosyl-L-methionine. Residue T104 coordinates GTP. S128 serves as a coordination point for S-adenosyl-L-methionine. Position 165 (K165) interacts with GTP. M199 serves as a coordination point for S-adenosyl-L-methionine. [4Fe-4S] cluster is bound by residues C262 and C265. Position 267–269 (R267–R269) interacts with GTP. A [4Fe-4S] cluster-binding site is contributed by C279.

The protein belongs to the radical SAM superfamily. MoaA family. Monomer and homodimer. [4Fe-4S] cluster is required as a cofactor.

It carries out the reaction GTP + AH2 + S-adenosyl-L-methionine = (8S)-3',8-cyclo-7,8-dihydroguanosine 5'-triphosphate + 5'-deoxyadenosine + L-methionine + A + H(+). It functions in the pathway cofactor biosynthesis; molybdopterin biosynthesis. In terms of biological role, catalyzes the cyclization of GTP to (8S)-3',8-cyclo-7,8-dihydroguanosine 5'-triphosphate. This chain is GTP 3',8-cyclase, found in Vibrio parahaemolyticus serotype O3:K6 (strain RIMD 2210633).